The chain runs to 155 residues: Ribosome maturation factor RimP (155 aa).

Belongs to the RimP family.

It localises to the cytoplasm. Its function is as follows. Required for maturation of 30S ribosomal subunits. This chain is Ribosome maturation factor RimP, found in Prochlorococcus marinus (strain MIT 9515).